We begin with the raw amino-acid sequence, 347 residues long: uncharacterized protein (347 aa).

A signal peptide spans 1 to 21 (MRYRIFLLFFFALLPTSLVWA).

This is an uncharacterized protein from Escherichia coli (strain K12).